The sequence spans 149 residues: MHCPFCNADDTKVIDSRLVADGHQVRRRRECLVCHERFTTFEMAELVMPRVIKSNGVREPFNEDKLRNGIQRALEKRPVSTELIEQSINRIKSNLRATGEREIMSKIIGNLVMEELKLLDKVAYIRFASVYRSFEDIREFGEEIARLEK.

Residues 3–34 (CPFCNADDTKVIDSRLVADGHQVRRRRECLVC) fold into a zinc finger. Residues 49–139 (PRVIKSNGVR…VYRSFEDIRE (91 aa)) form the ATP-cone domain.

Belongs to the NrdR family. Zn(2+) serves as cofactor.

In terms of biological role, negatively regulates transcription of bacterial ribonucleotide reductase nrd genes and operons by binding to NrdR-boxes. In Tolumonas auensis (strain DSM 9187 / NBRC 110442 / TA 4), this protein is Transcriptional repressor NrdR.